A 368-amino-acid chain; its full sequence is Protein-glutamate methylesterase/protein-glutamine glutaminase 2 (368 aa).

The Response regulatory domain maps to 6–123 (KVLLVDDSAV…KEYLESAAGE (118 aa)). A 4-aspartylphosphate modification is found at D57. In terms of domain architecture, CheB-type methylesterase spans 169–355 (IAGANKIAAL…SLERIPQCVL (187 aa)). Active-site residues include S181, H207, and D303.

This sequence belongs to the CheB family. In terms of processing, phosphorylated by CheA. Phosphorylation of the N-terminal regulatory domain activates the methylesterase activity.

Its subcellular location is the cytoplasm. It catalyses the reaction [protein]-L-glutamate 5-O-methyl ester + H2O = L-glutamyl-[protein] + methanol + H(+). It carries out the reaction L-glutaminyl-[protein] + H2O = L-glutamyl-[protein] + NH4(+). Involved in chemotaxis. Part of a chemotaxis signal transduction system that modulates chemotaxis in response to various stimuli. Catalyzes the demethylation of specific methylglutamate residues introduced into the chemoreceptors (methyl-accepting chemotaxis proteins or MCP) by CheR. Also mediates the irreversible deamidation of specific glutamine residues to glutamic acid. This is Protein-glutamate methylesterase/protein-glutamine glutaminase 2 from Hahella chejuensis (strain KCTC 2396).